The chain runs to 149 residues: Protein AE7-like 2 (149 aa).

Belongs to the MIP18 family.

In terms of biological role, may play a role in chromosome segregation through establishment of sister chromatid cohesion. Unable to complement ae7 mutants, and thus probably not involved in the cytosolic iron-sulfur assembly (CIA) pathway. This chain is Protein AE7-like 2, found in Arabidopsis thaliana (Mouse-ear cress).